The following is a 309-amino-acid chain: MSSPRAVVQLGKAQPAGEELATANQTAQQPSSPAMRRLTVDDFEIGRPLGKGKFGNVYLARLKESHFIVALKVLFKSQIEKEGLEHQLRREIEIQAHLQHPNILRLYNYFHDARRVYLILEYAPRGELYKELQKSEKLDEQRTATIIEELADALTYCHDKKVIHRDIKPENLLLGFRGEVKIADFGWSVHTPSLRRKTMCGTLDYLPPEMIEGRTYDEKVDLWCIGVLCYELLVGYPPFESASHSETYRRILKVDVRFPLSMPLGARDLISRLLRYQPLERLPLAQILKHPWVQAHSRRVLPPCAQMAS.

The segment at 1–33 (MSSPRAVVQLGKAQPAGEELATANQTAQQPSSP) is disordered. Polar residues predominate over residues 22-32 (TANQTAQQPSS). Positions 43–293 (FEIGRPLGKG…LAQILKHPWV (251 aa)) constitute a Protein kinase domain. ATP contacts are provided by residues 49–57 (LGKGKFGNV) and Lys-72. The active-site Proton acceptor is Asp-166. Thr-198 is modified (phosphothreonine; by PKA). An interaction with BIRC5 region spans residues 292–309 (WVQAHSRRVLPPCAQMAS).

It belongs to the protein kinase superfamily. Ser/Thr protein kinase family. Aurora subfamily. Component of the chromosomal passenger complex (CPC) composed of at least BIRC5/survivin, CDCA8/borealin, INCENP, AURKB or AURKC; predominantly independent AURKB- and AURKC-containing complexes exist; in the complex interacts directly with BIRC5/survivin and INCENP. Interacts with TACC1. Isoform 1 and isoform 2 are expressed in testis. Elevated expression levels were seen only in a subset of cancer cell lines such as Hep-G2, Huh-7 and HeLa. Expression is maximum at M phase.

It is found in the nucleus. The protein localises to the chromosome. It localises to the centromere. Its subcellular location is the cytoplasm. The protein resides in the cytoskeleton. It is found in the spindle. It carries out the reaction L-seryl-[protein] + ATP = O-phospho-L-seryl-[protein] + ADP + H(+). The catalysed reaction is L-threonyl-[protein] + ATP = O-phospho-L-threonyl-[protein] + ADP + H(+). With respect to regulation, okadaic acid, an inhibitor of protein phosphatase 1 (PP1), protein phosphatase 2A (PP2A) and protein phosphatase 5 (PP5), increases AURKC activity. AURKC is also stabilized through its interaction with INCENP, which also acts as an activator. In terms of biological role, serine/threonine-protein kinase component of the chromosomal passenger complex (CPC), a complex that acts as a key regulator of mitosis. The CPC complex has essential functions at the centromere in ensuring correct chromosome alignment and segregation and is required for chromatin-induced microtubule stabilization and spindle assembly. Also plays a role in meiosis and more particularly in spermatogenesis. Has redundant cellular functions with AURKB and can rescue an AURKB knockdown. Like AURKB, AURKC phosphorylates histone H3 at 'Ser-10' and 'Ser-28'. AURKC phosphorylates the CPC complex subunits BIRC5/survivin and INCENP leading to increased AURKC activity. Phosphorylates TACC1, another protein involved in cell division, at 'Ser-228'. This is Aurora kinase C (AURKC) from Homo sapiens (Human).